Here is a 242-residue protein sequence, read N- to C-terminus: Small ribosomal subunit protein uS7m (242 aa).

The N-terminal 37 residues, M1 to Y37, are a transit peptide targeting the mitochondrion. The residue at position 228 (K228) is an N6-acetyllysine.

It belongs to the universal ribosomal protein uS7 family. As to quaternary structure, component of the mitochondrial ribosome small subunit (28S) which comprises a 12S rRNA and about 30 distinct proteins.

It localises to the mitochondrion. The polypeptide is Small ribosomal subunit protein uS7m (MRPS7) (Bos taurus (Bovine)).